A 383-amino-acid polypeptide reads, in one-letter code: MTKPLRIGIVAGELSGDTLGEGFIKSIKAQYPDAEFVGIGGPKMIAQGCDSLFDMEELAVMGLVEVLGRLPRLLKVKAELVRYFTQNPPDVFIGIDAPDFNLRLEKTLKDNGIKTVHYVSPSVWAWRPKRIFKIDAATDLVLAFLPFEKAFYDKYNVACEFIGHTLADAIPMETDKIAARDLLGLEQEREWLAVLPGSRGGEVALIAKPFIETCQRIHKQHPNMGFVVAAVNEKRREQFETIWKATAPELDFVIIQDTARNVMTAADAVLLASGTVALECMLVKRPMVVGYQVNKLTGWIAQKLSITEFVSLPNVLAGKELVQEFIQEECHPDFLYPAMEKVLNNDNRELIEKFTEMHQWIRKDADKQAANAVLRLINKETAE.

The protein belongs to the LpxB family.

The catalysed reaction is a lipid X + a UDP-2-N,3-O-bis[(3R)-3-hydroxyacyl]-alpha-D-glucosamine = a lipid A disaccharide + UDP + H(+). It participates in bacterial outer membrane biogenesis; LPS lipid A biosynthesis. Functionally, condensation of UDP-2,3-diacylglucosamine and 2,3-diacylglucosamine-1-phosphate to form lipid A disaccharide, a precursor of lipid A, a phosphorylated glycolipid that anchors the lipopolysaccharide to the outer membrane of the cell. This chain is Lipid-A-disaccharide synthase, found in Aliivibrio fischeri (strain ATCC 700601 / ES114) (Vibrio fischeri).